A 256-amino-acid chain; its full sequence is 5-keto-4-deoxy-D-glucarate aldolase (256 aa).

Catalysis depends on His-50, which acts as the Proton acceptor. Gln-151 lines the substrate pocket. Residue Glu-153 coordinates Mg(2+). Substrate is bound by residues Ser-178 and Asp-179. Asp-179 lines the Mg(2+) pocket.

The protein belongs to the HpcH/HpaI aldolase family. KDGluc aldolase subfamily. As to quaternary structure, homohexamer; trimer of dimers. It depends on Mg(2+) as a cofactor.

It catalyses the reaction 5-dehydro-4-deoxy-D-glucarate = 2-hydroxy-3-oxopropanoate + pyruvate. The enzyme catalyses 2-dehydro-3-deoxy-D-glucarate = 2-hydroxy-3-oxopropanoate + pyruvate. It functions in the pathway carbohydrate acid metabolism; galactarate degradation; D-glycerate from galactarate: step 2/3. Functionally, catalyzes the reversible retro-aldol cleavage of both 5-keto-4-deoxy-D-glucarate and 2-keto-3-deoxy-D-glucarate to pyruvate and tartronic semialdehyde. This Shigella sonnei (strain Ss046) protein is 5-keto-4-deoxy-D-glucarate aldolase.